An 82-amino-acid chain; its full sequence is Penaeidin-3d (82 aa).

Positions 1–19 (MRLVVCLVFLASFALVCQG) are cleaved as a signal peptide. Gln-20 is modified (pyrrolidone carboxylic acid). Cystine bridges form between Cys-51–Cys-66, Cys-55–Cys-73, and Cys-67–Cys-74. A Serine amide modification is found at Ser-81.

This sequence belongs to the penaeidin family.

Its subcellular location is the cytoplasmic granule. Functionally, antibacterial and antifungal activity. Presents chitin-binding activity. This is Penaeidin-3d from Penaeus vannamei (Whiteleg shrimp).